The primary structure comprises 795 residues: Delta-1-pyrroline-5-carboxylate synthase (795 aa).

A glutamate 5-kinase region spans residues Met1–Pro361. Positions 117, 223, and 246 each coordinate substrate. ATP-binding positions include Ser266–Asp267 and Leu305–Lys311. N6-succinyllysine occurs at positions 311, 347, and 550. The segment at Thr362–Ser795 is gamma-glutamyl phosphate reductase.

This sequence in the N-terminal section; belongs to the glutamate 5-kinase family. The protein in the C-terminal section; belongs to the gamma-glutamyl phosphate reductase family. Can form homodimers/multimers.

It localises to the mitochondrion matrix. The enzyme catalyses L-glutamate + ATP = L-glutamyl 5-phosphate + ADP. The catalysed reaction is L-glutamate 5-semialdehyde + phosphate + NADP(+) = L-glutamyl 5-phosphate + NADPH + H(+). It functions in the pathway amino-acid biosynthesis; L-proline biosynthesis; L-glutamate 5-semialdehyde from L-glutamate: step 1/2. The protein operates within amino-acid biosynthesis; L-proline biosynthesis; L-glutamate 5-semialdehyde from L-glutamate: step 2/2. Its activity is regulated as follows. Isoform Short: Inhibited by L-ornithine with a Ki of approximately 0.25 mm. Isoform Long: Insensitive to ornithine inhibition. Thus, the two amino acid insert in the long isoform abolishes feedback inhibition of P5CS activity by L-ornithine. Functionally, bifunctional enzyme that converts glutamate to glutamate 5-semialdehyde, an intermediate in the biosynthesis of proline, ornithine and arginine. The protein is Delta-1-pyrroline-5-carboxylate synthase (Aldh18a1) of Mus musculus (Mouse).